The primary structure comprises 132 residues: DNA-entry nuclease inhibitor (132 aa).

In terms of assembly, this protein is a subunit of a 75 kDa protein complex, which governs binding and entry of donor DNA. The complex is a tetramer of two subunits of the DNA-entry nuclease and two subunits of a competence-specific protein. Only the complex is able to bind ds- and ss-DNA.

The protein localises to the cell membrane. In terms of biological role, plays a role in the competence of cells to be transformed. It inhibits the activity of the DNA-entry nuclease. This Bacillus subtilis (strain 168) protein is DNA-entry nuclease inhibitor (nin).